The following is a 425-amino-acid chain: Serine hydroxymethyltransferase (425 aa).

Residues leucine 128 and 132–134 contribute to the (6S)-5,6,7,8-tetrahydrofolate site; that span reads GHL. Residue lysine 237 is modified to N6-(pyridoxal phosphate)lysine.

This sequence belongs to the SHMT family. Homodimer. It depends on pyridoxal 5'-phosphate as a cofactor.

The protein localises to the cytoplasm. The catalysed reaction is (6R)-5,10-methylene-5,6,7,8-tetrahydrofolate + glycine + H2O = (6S)-5,6,7,8-tetrahydrofolate + L-serine. It participates in one-carbon metabolism; tetrahydrofolate interconversion. It functions in the pathway amino-acid biosynthesis; glycine biosynthesis; glycine from L-serine: step 1/1. Its function is as follows. Catalyzes the reversible interconversion of serine and glycine with tetrahydrofolate (THF) serving as the one-carbon carrier. This reaction serves as the major source of one-carbon groups required for the biosynthesis of purines, thymidylate, methionine, and other important biomolecules. Also exhibits THF-independent aldolase activity toward beta-hydroxyamino acids, producing glycine and aldehydes, via a retro-aldol mechanism. The polypeptide is Serine hydroxymethyltransferase (Wolbachia pipientis subsp. Culex pipiens (strain wPip)).